A 442-amino-acid chain; its full sequence is Mimosinase, chloroplastic (442 aa).

The N-terminal 35 residues, 1–35, are a transit peptide targeting the chloroplast; the sequence is MALPSAFLNPFVPSPVTANPRTKFARVGKGFNVSC. Tyr103, Arg105, Gly133, Met134, Ser252, and Thr254 together coordinate pyridoxal 5'-phosphate. Lys255 is modified (N6-(pyridoxal phosphate)lysine).

It belongs to the trans-sulfuration enzymes family. In terms of assembly, forms homodimers. May form homotetramers from two homodimers. Pyridoxal 5'-phosphate serves as cofactor.

The protein resides in the plastid. The protein localises to the chloroplast. The catalysed reaction is L-mimosine + H2O = 3-hydroxy-4H-pyrid-4-one + pyruvate + NH4(+). It carries out the reaction L,L-cystathionine + H2O = L-homocysteine + pyruvate + NH4(+). The enzyme catalyses an S-substituted L-cysteine + H2O = a thiol + pyruvate + NH4(+). Catalyzes the degradation of mimosine, which is a toxic secondary metabolite found in all Mimosa and Leucaena species. Catalyzes the degradation of cystathionine, but seems to have lower preference toward cystathionine over mimosine. In Mimosa pudica (Sensitive plant), this protein is Mimosinase, chloroplastic.